We begin with the raw amino-acid sequence, 165 residues long: Putative 4-hydroxy-4-methyl-2-oxoglutarate aldolase (165 aa).

Residues 80–83 (GGNL) and R102 each bind substrate. D103 serves as a coordination point for a divalent metal cation.

Belongs to the class II aldolase/RraA-like family. As to quaternary structure, homotrimer. A divalent metal cation is required as a cofactor.

It catalyses the reaction 4-hydroxy-4-methyl-2-oxoglutarate = 2 pyruvate. The catalysed reaction is oxaloacetate + H(+) = pyruvate + CO2. Catalyzes the aldol cleavage of 4-hydroxy-4-methyl-2-oxoglutarate (HMG) into 2 molecules of pyruvate. Also contains a secondary oxaloacetate (OAA) decarboxylase activity due to the common pyruvate enolate transition state formed following C-C bond cleavage in the retro-aldol and decarboxylation reactions. The protein is Putative 4-hydroxy-4-methyl-2-oxoglutarate aldolase of Burkholderia mallei (strain NCTC 10247).